The sequence spans 170 residues: uncharacterized protein (170 aa).

The chain crosses the membrane as a helical span at residues 96–116; it reads FSAISIGSFPIVLFLSLFFFD.

It localises to the membrane. This is an uncharacterized protein from Borreliella burgdorferi (strain ATCC 35210 / DSM 4680 / CIP 102532 / B31) (Borrelia burgdorferi).